A 296-amino-acid chain; its full sequence is Bifunctional protein FolD (296 aa).

NADP(+) contacts are provided by residues 166-168, serine 195, and threonine 236; that span reads GRS.

It belongs to the tetrahydrofolate dehydrogenase/cyclohydrolase family. Homodimer.

The catalysed reaction is (6R)-5,10-methylene-5,6,7,8-tetrahydrofolate + NADP(+) = (6R)-5,10-methenyltetrahydrofolate + NADPH. The enzyme catalyses (6R)-5,10-methenyltetrahydrofolate + H2O = (6R)-10-formyltetrahydrofolate + H(+). It participates in one-carbon metabolism; tetrahydrofolate interconversion. Catalyzes the oxidation of 5,10-methylenetetrahydrofolate to 5,10-methenyltetrahydrofolate and then the hydrolysis of 5,10-methenyltetrahydrofolate to 10-formyltetrahydrofolate. This chain is Bifunctional protein FolD, found in Dehalococcoides mccartyi (strain ATCC BAA-2100 / JCM 16839 / KCTC 5957 / BAV1).